The sequence spans 617 residues: MVVPRGQEHRAPQEVETREDEEQNIKLTEILELLVAAGYFRARIKGLSPFDKVVGGMTWCITTCNFDIDIDLLFQENSTIGQKIALTEKIVSVLPKMKCPHRLEPHQIQGLDFIHIFPVVQWLVKRAIETREEMGDYIRSYSISQFQKTHRLPEDDEFMQRKEKAIKTVTDIFEVYKPQRKYKRQKGAEEILDEESKVHATLLEYGRRYGFSRQAGKTEQTEDKKIVLPSGLAAAGKAEPCDEDDLRAAEELRIKTLMTGMAAMATEEGKLTASTVGQIVGLQSDEIKQIVSEYAEKQSELSAEERPERLGAAQQHRRKVASLNKQILQKTKLLEELQAKFVDLQAKCTEAKKTLTEVESYSEKLDKELAALETIESQADSSVLQNLRMLVAINENLKSQEQEFKAHCREEMERLQQDIENLKAEAAENGEEEEPNKLIDQQYQTEKEKLQKIRLLLARRNREIAILQRKIDEVPSRAELTQYQKRFIELYSQVSATHKETKQFFTLYNTLDDKKVYLEKEVNLLNSIHDNFHQAMASSGSREQFLRQMEQIVEGIKQNRMKMEKKKQENKMRRDQLNDEYLELLEKQRLYFKTVKEFKEECRKNEMLLSKLKASSS.

Over residues 1-16 (MVVPRGQEHRAPQEVE) the composition is skewed to basic and acidic residues. The disordered stretch occupies residues 1 to 20 (MVVPRGQEHRAPQEVETRED). Coiled-coil stretches lie at residues 285 to 474 (DEIK…IDEV) and 546 to 614 (LRQM…KLKA).

The protein belongs to the CCDC93 family.

The protein localises to the early endosome. Its function is as follows. May be involved in copper-dependent ATP7A trafficking between the trans-Golgi network and vesicles in the cell periphery. This is Coiled-coil domain-containing protein 93 (CCDC93) from Gallus gallus (Chicken).